A 462-amino-acid polypeptide reads, in one-letter code: Cysteine--tRNA ligase (462 aa).

A Zn(2+)-binding site is contributed by cysteine 30. The short motif at 32 to 42 (MTVYDYCHVGH) is the 'HIGH' region element. Zn(2+) is bound by residues cysteine 214, histidine 239, and glutamate 243. Positions 271-275 (KMSKS) match the 'KMSKS' region motif. Lysine 274 is an ATP binding site.

It belongs to the class-I aminoacyl-tRNA synthetase family. As to quaternary structure, monomer. Zn(2+) serves as cofactor.

Its subcellular location is the cytoplasm. The catalysed reaction is tRNA(Cys) + L-cysteine + ATP = L-cysteinyl-tRNA(Cys) + AMP + diphosphate. The sequence is that of Cysteine--tRNA ligase from Cupriavidus pinatubonensis (strain JMP 134 / LMG 1197) (Cupriavidus necator (strain JMP 134)).